Reading from the N-terminus, the 37-residue chain is MKVRASVRKICKDCRLIRRKRRVMVICSNPKHKQRQG.

The protein belongs to the bacterial ribosomal protein bL36 family.

The protein localises to the plastid. Its subcellular location is the chloroplast. The chain is Large ribosomal subunit protein bL36c from Oltmannsiellopsis viridis (Marine flagellate).